We begin with the raw amino-acid sequence, 290 residues long: Glycine--tRNA ligase alpha subunit (290 aa).

This sequence belongs to the class-II aminoacyl-tRNA synthetase family. As to quaternary structure, tetramer of two alpha and two beta subunits.

The protein resides in the cytoplasm. It carries out the reaction tRNA(Gly) + glycine + ATP = glycyl-tRNA(Gly) + AMP + diphosphate. The chain is Glycine--tRNA ligase alpha subunit from Fusobacterium nucleatum subsp. nucleatum (strain ATCC 25586 / DSM 15643 / BCRC 10681 / CIP 101130 / JCM 8532 / KCTC 2640 / LMG 13131 / VPI 4355).